Reading from the N-terminus, the 488-residue chain is 3-octaprenyl-4-hydroxybenzoate carboxy-lyase (488 aa).

Asn-172 lines the Mn(2+) pocket. Residues 175–177, 189–191, and 194–195 each bind prenylated FMN; these read IYR, RWL, and RG. Glu-238 lines the Mn(2+) pocket. The Proton donor role is filled by Asp-287.

It belongs to the UbiD family. As to quaternary structure, homohexamer. The cofactor is prenylated FMN. It depends on Mn(2+) as a cofactor.

Its subcellular location is the cell membrane. The enzyme catalyses a 4-hydroxy-3-(all-trans-polyprenyl)benzoate + H(+) = a 2-(all-trans-polyprenyl)phenol + CO2. Its pathway is cofactor biosynthesis; ubiquinone biosynthesis. In terms of biological role, catalyzes the decarboxylation of 3-octaprenyl-4-hydroxy benzoate to 2-octaprenylphenol, an intermediate step in ubiquinone biosynthesis. This chain is 3-octaprenyl-4-hydroxybenzoate carboxy-lyase, found in Pseudomonas aeruginosa (strain LESB58).